A 116-amino-acid polypeptide reads, in one-letter code: Large ribosomal subunit protein uL18 (116 aa).

The protein belongs to the universal ribosomal protein uL18 family. Part of the 50S ribosomal subunit; part of the 5S rRNA/L5/L18/L25 subcomplex. Contacts the 5S and 23S rRNAs.

Its function is as follows. This is one of the proteins that bind and probably mediate the attachment of the 5S RNA into the large ribosomal subunit, where it forms part of the central protuberance. The sequence is that of Large ribosomal subunit protein uL18 from Pseudomonas fluorescens (strain SBW25).